The following is a 758-amino-acid chain: Polyribonucleotide nucleotidyltransferase (758 aa).

2 residues coordinate Mg(2+): Asp-488 and Asp-494. One can recognise a KH domain in the interval 555 to 614; the sequence is PKLYTMKINPEKIRDVIGKGGAVIRALTEETGTQINIDEDGTITIASTDSAKADEAKRRI. The region spanning 624-692 is the S1 motif domain; sequence GKIYEGPVVK…EKGRVKLSMR (69 aa). The disordered stretch occupies residues 692–758; sequence RALLDRPMGD…AGEHSGQMDA (67 aa). A compositionally biased stretch (basic and acidic residues) spans 707-735; the sequence is PAERGERGDRGDRGDRPERGERRERREPA. The segment covering 736-745 has biased composition (low complexity); that stretch reads GADQQQQQQQ.

The protein belongs to the polyribonucleotide nucleotidyltransferase family. It depends on Mg(2+) as a cofactor.

Its subcellular location is the cytoplasm. It catalyses the reaction RNA(n+1) + phosphate = RNA(n) + a ribonucleoside 5'-diphosphate. Functionally, involved in mRNA degradation. Catalyzes the phosphorolysis of single-stranded polyribonucleotides processively in the 3'- to 5'-direction. The chain is Polyribonucleotide nucleotidyltransferase from Paracidovorax citrulli (strain AAC00-1) (Acidovorax citrulli).